Reading from the N-terminus, the 224-residue chain is Ribonuclease 3 (224 aa).

The RNase III domain occupies 5–127; sequence LERLCRRLNY…ILAAIYLDGG (123 aa). A Mg(2+)-binding site is contributed by E40. The active site involves D44. D113 and E116 together coordinate Mg(2+). Residue E116 is part of the active site. Residues 154–224 enclose the DRBM domain; sequence DAKTQLQEFL…AKAMLEQLQG (71 aa).

The protein belongs to the ribonuclease III family. Homodimer. The cofactor is Mg(2+).

Its subcellular location is the cytoplasm. It catalyses the reaction Endonucleolytic cleavage to 5'-phosphomonoester.. Digests double-stranded RNA. Involved in the processing of primary rRNA transcript to yield the immediate precursors to the large and small rRNAs (23S and 16S). Processes some mRNAs, and tRNAs when they are encoded in the rRNA operon. Processes pre-crRNA and tracrRNA of type II CRISPR loci if present in the organism. This Legionella pneumophila (strain Lens) protein is Ribonuclease 3.